The sequence spans 1705 residues: MEMGSDGEDQKIRSVVGDANLNNKKKKIDNNSSSKDGRVKPKRQMKTPFQLETLEKVYSEEKYPSEATRAELSEKLDLSDRQLQMWFCHRRLKDKKDGQSNKPVKSSVAAVQSASVNELPAAAGSVPEQDSRSDSGSESGCSPYSNSRRNFASGSSSSRAELDEYETMGKPSYESRLSTMVHRAIVCIEAQLGEPLRDDGPILGMEFDPLPPGAFGTPIAMQKHLLHPYESDLYERHDPRPRRSHAAARSFHEQQSLDDPSSFTPNMYERYSENHARGMDYEVARSRISSFMHANGPVPRSYVTPGHASRNCSTSQQDMPSPIESAHHGDRFLLEKDSSVLGTEDPYLLPDGVRKSSDVHRKGKINDGRLGRGSETRENHGPKDLEKLEIQRKKNEERMRKEMERNERERRKEEERLMRERIKEEERLQREQRREVERREKFLQRENERAEKKKQKDEIRREKDAIRRKLAIEKATARRIAKESMDLIEDEQLELMELAAISKGLPSVLQLDHDTLQNLEVYRDSLSTFPPKSLQLKMPFAISPWKDSDETVGNLLMVWRFLISFSDVLDLWPFTLDEFIQAFHDYDSRLLGEIHVTLLRSIIRDVEDVARTPFSGIGNNQYTTANPEGGHPQIVEGAYAWGFDIRSWKKHLNPLTWPEILRQLALSAGFGPKLKKKHSRLTNTGDKDEAKGCEDVISTIRNGTAAESAFASMREKGLLAPRKSRHRLTPGTVKFAAFHVLSLEGSKGLTVLELADKIQKSGLRDLTTSKTPEASISVALTRDVKLFERIAPSTYCVRAPYVKDPKDGEAILADARKKIRAFENGFTGPEDVNDLERDEDFEIDIDEDPEVDDLATLASASKSAVLGEANVLSGKGVDTMFCDVKADVKSELEKEFSSPPPSTMKSIVPQHSERHKNTVVGGVDAVIDESNQGQSWIQGLTEGDYCHLSVEERLNALVALVGIANEGNSIRTGLEDRMEAANALKKQMWAEAQLDNSCMRDVLKLDLQNLASSKTESTIGLPIIQSSTRERDSFDRDPSQLLDETKPLEDLSNDLHKSSAERALINQDANISQENYASKRSRSQLKSYIGHKAEEVYPYRSLPLGQDRRHNRYWHFAVSVSKSDPCSRLLFVELHDGKWLLIDSEEAFDILVASLDMRGIRESHLRIMLQKIEGSFKENACKDIKLARNPFLTEKSVVNHSPTDSVSPSSSAISGSNSDSMETSTSIRVDLGRNDTENKNLSKRFHDFQRWMWTETYSSLPSCARKYGKKRSELLATCDACVASYLSEYTFCSSCHQRLDVVDSSEILDSGLAVSPLPFGVRLLKPLLVFLEASVPDEALESFWTEDQRKKWGFRLNTSSSPGELLQVLTSLESAIKKESLSSNFMSAKELLGAANAEADDQGSVDVLPWIPKTVSAVALRLSELDASIIYVKPEKPEVIPEDENEQISLFPRDSPFKGKGPREQEDQDEVAPNPGNRNKKRARVSLGSGSNRKVKRKKAQSGLNKFVVGRRNVAVNSNLMAVELNHQVPGKGKRTVRKRPERIDEDNSHLVNRMANIVRPKSEEVEEDEEEEEQTFRDINEDWAAGETPREMEEDWANETPNRMMTPMQVDDESDNSVGVESEDEDGGGQFVDYSQRNKWGLDWNSNLNVAIEEDEEEEVVGVGRVEGEDDAEMSESSEDDDVPANNAANNYDRESEGYSSSDS.

5 disordered regions span residues 1-53 (MEMG…QLET), 118-167 (ELPA…EYET), 237-267 (HDPR…TPNM), 296-322 (GPVP…MPSP), and 352-414 (GVRK…RKEE). Positions 39 to 98 (VKPKRQMKTPFQLETLEKVYSEEKYPSEATRAELSEKLDLSDRQLQMWFCHRRLKDKKDG) form a DNA-binding region, homeobox. Residues 136–159 (GSESGCSPYSNSRRNFASGSSSSR) are compositionally biased toward low complexity. Polar residues-rich tracts occupy residues 253–265 (EQQS…SFTP) and 310–319 (RNCSTSQQDM). The region spanning 549 to 608 (DETVGNLLMVWRFLISFSDVLDLWPFTLDEFIQAFHDYDSRLLGEIHVTLLRSIIRDVED) is the DDT domain. Residues 731–800 (GTVKFAAFHV…APSTYCVRAP (70 aa)) enclose the HTH HARE-type domain. Disordered regions lie at residues 1028–1053 (TRER…DLSN), 1198–1229 (VNHS…SIRV), 1441–1502 (PEDE…KAQS), 1561–1635 (PKSE…FVDY), and 1652–1705 (AIEE…SSDS). Positions 1201–1220 (SPTDSVSPSSSAISGSNSDS) are enriched in low complexity. Basic and acidic residues predominate over residues 1455 to 1465 (SPFKGKGPREQ). Composition is skewed to acidic residues over residues 1565–1574 (EVEEDEEEEE), 1611–1628 (VDDE…DEDG), and 1669–1684 (GEDD…DDDV).

Interacts with CHR11 and CHR17. Interacts (via the DDT domain) with CHR11 (via C-terminus). As to expression, highly expressed in growing tissues such as inflorescence and flower meristems, young leaves and floral organs. Expressed in roots, rosette and cauline leaves, stems, flowers, inflorescences and siliques.

It is found in the nucleus. In terms of biological role, transcriptional regulator required for the maintenance of the plant vegetative phase. In association with CHR11 or CHR17 may prevent the early activation of the vegetative-to-reproductive transition by regulating key genes that contribute to flower timing, such as FT, SEP1, SEP3, AGL8/FUL, SOC1 and FLC. This is Homeobox-DDT domain protein RLT1 from Arabidopsis thaliana (Mouse-ear cress).